A 335-amino-acid polypeptide reads, in one-letter code: Thioredoxin reductase (335 aa).

Residues 22–25 (SGPA), 44–51 (EGTSFGGA), N60, and V93 contribute to the FAD site. An intrachain disulfide couples C145 to C148. Positions 166, 185, 191, 248, and 268 each coordinate NADP(+). Residues D288 and 295 to 298 (RQAV) contribute to the FAD site. R295 provides a ligand contact to NADP(+).

Belongs to the class-II pyridine nucleotide-disulfide oxidoreductase family. Homodimer. FAD is required as a cofactor.

The protein resides in the cytoplasm. It carries out the reaction [thioredoxin]-dithiol + NADP(+) = [thioredoxin]-disulfide + NADPH + H(+). The chain is Thioredoxin reductase from Mycobacterium tuberculosis (strain CDC 1551 / Oshkosh).